A 1477-amino-acid chain; its full sequence is Putative insulin-like peptide receptor (1477 aa).

An N-terminal signal peptide occupies residues methionine 1–serine 24. Residues alanine 25–leucine 980 lie on the Extracellular side of the membrane. Asparagine 55, asparagine 255, asparagine 300, asparagine 325, asparagine 457, asparagine 491, asparagine 549, asparagine 644, asparagine 732, asparagine 791, asparagine 874, asparagine 895, and asparagine 957 each carry an N-linked (GlcNAc...) asparagine glycan. 2 consecutive Fibronectin type-III domains span residues glutamate 652–aspartate 750 and asparagine 780–alanine 869. Positions leucine 880 to leucine 971 constitute a Fibronectin type-III 3 domain. A helical membrane pass occupies residues isoleucine 981–leucine 1001. The Cytoplasmic segment spans residues tyrosine 1002–valine 1477. The region spanning isoleucine 1044–valine 1315 is the Protein kinase domain. ATP is bound by residues leucine 1050–valine 1058 and lysine 1077. Aspartate 1175 functions as the Proton acceptor in the catalytic mechanism. Tyrosine 1201 bears the Phosphotyrosine; by autocatalysis mark. 2 disordered regions span residues tyrosine 1350 to glutamate 1376 and lysine 1391 to cysteine 1421. Polar residues predominate over residues asparagine 1356–lysine 1368. Positions lysine 1403–arginine 1412 are enriched in basic residues.

The protein belongs to the protein kinase superfamily. Tyr protein kinase family. Insulin receptor subfamily. The cofactor is Mn(2+). As to expression, expressed in dividing epithelial cells.

It is found in the membrane. It catalyses the reaction L-tyrosyl-[protein] + ATP = O-phospho-L-tyrosyl-[protein] + ADP + H(+). Its function is as follows. This receptor probably binds an insulin related protein and has a tyrosine-protein kinase activity. The polypeptide is Putative insulin-like peptide receptor (HTK7) (Hydra vulgaris (Hydra)).